The primary structure comprises 444 residues: Probable glycine dehydrogenase (decarboxylating) subunit 1 (444 aa).

It belongs to the GcvP family. N-terminal subunit subfamily. In terms of assembly, the glycine cleavage system is composed of four proteins: P, T, L and H. In this organism, the P 'protein' is a heterodimer of two subunits.

It carries out the reaction N(6)-[(R)-lipoyl]-L-lysyl-[glycine-cleavage complex H protein] + glycine + H(+) = N(6)-[(R)-S(8)-aminomethyldihydrolipoyl]-L-lysyl-[glycine-cleavage complex H protein] + CO2. Its function is as follows. The glycine cleavage system catalyzes the degradation of glycine. The P protein binds the alpha-amino group of glycine through its pyridoxal phosphate cofactor; CO(2) is released and the remaining methylamine moiety is then transferred to the lipoamide cofactor of the H protein. The sequence is that of Probable glycine dehydrogenase (decarboxylating) subunit 1 from Chlorobaculum parvum (strain DSM 263 / NCIMB 8327) (Chlorobium vibrioforme subsp. thiosulfatophilum).